Reading from the N-terminus, the 249-residue chain is Large ribosomal subunit protein uL4 (249 aa).

This sequence belongs to the universal ribosomal protein uL4 family. As to quaternary structure, part of the 50S ribosomal subunit.

Functionally, one of the primary rRNA binding proteins, this protein initially binds near the 5'-end of the 23S rRNA. It is important during the early stages of 50S assembly. It makes multiple contacts with different domains of the 23S rRNA in the assembled 50S subunit and ribosome. Its function is as follows. Forms part of the polypeptide exit tunnel. This Methanoculleus marisnigri (strain ATCC 35101 / DSM 1498 / JR1) protein is Large ribosomal subunit protein uL4.